We begin with the raw amino-acid sequence, 121 residues long: Ribonuclease P protein component (121 aa).

It belongs to the RnpA family. As to quaternary structure, consists of a catalytic RNA component (M1 or rnpB) and a protein subunit.

The enzyme catalyses Endonucleolytic cleavage of RNA, removing 5'-extranucleotides from tRNA precursor.. In terms of biological role, RNaseP catalyzes the removal of the 5'-leader sequence from pre-tRNA to produce the mature 5'-terminus. It can also cleave other RNA substrates such as 4.5S RNA. The protein component plays an auxiliary but essential role in vivo by binding to the 5'-leader sequence and broadening the substrate specificity of the ribozyme. In Oceanobacillus iheyensis (strain DSM 14371 / CIP 107618 / JCM 11309 / KCTC 3954 / HTE831), this protein is Ribonuclease P protein component.